The sequence spans 338 residues: Methionine import ATP-binding protein MetN 1 (338 aa).

The ABC transporter domain occupies 2-241 (IELHQVSKSF…AKHATTKRFV (240 aa)). 38–45 (GYSGAGKS) serves as a coordination point for ATP.

This sequence belongs to the ABC transporter superfamily. Methionine importer (TC 3.A.1.24) family. In terms of assembly, the complex is composed of two ATP-binding proteins (MetN), two transmembrane proteins (MetI) and a solute-binding protein (MetQ).

It is found in the cell membrane. It catalyses the reaction L-methionine(out) + ATP + H2O = L-methionine(in) + ADP + phosphate + H(+). It carries out the reaction D-methionine(out) + ATP + H2O = D-methionine(in) + ADP + phosphate + H(+). Part of the ABC transporter complex MetNIQ involved in methionine import. Responsible for energy coupling to the transport system. The chain is Methionine import ATP-binding protein MetN 1 from Listeria innocua serovar 6a (strain ATCC BAA-680 / CLIP 11262).